A 357-amino-acid chain; its full sequence is UDP-N-acetylglucosamine 2-epimerase homolog (357 aa).

The protein belongs to the UDP-N-acetylglucosamine 2-epimerase family.

In Methanococcus maripaludis (strain DSM 14266 / JCM 13030 / NBRC 101832 / S2 / LL), this protein is UDP-N-acetylglucosamine 2-epimerase homolog.